The sequence spans 156 residues: Small ribosomal subunit protein uS7 (156 aa).

Belongs to the universal ribosomal protein uS7 family. As to quaternary structure, part of the 30S ribosomal subunit. Contacts proteins S9 and S11.

Its function is as follows. One of the primary rRNA binding proteins, it binds directly to 16S rRNA where it nucleates assembly of the head domain of the 30S subunit. Is located at the subunit interface close to the decoding center, probably blocks exit of the E-site tRNA. This Baumannia cicadellinicola subsp. Homalodisca coagulata protein is Small ribosomal subunit protein uS7.